The sequence spans 4076 residues: MGKITKTMQQKHRDTLSPWLKEFVDTASSAPLPLILQRLDEFPRRWMFPRGDLYHWIPLLNRFDNILESICATYELSKGPQTRDFGRDVLLNNGGPSLEYRDEPWTVERLAEAGYKEDGDCQLLVAILKFTRMLLEHCGNRSIYASSHHIDRLLNSPYLEVQAAALEVGLELAQRYNASVKRMPSPPRSVNPTLLANHYNIDLEKVQLLARPFVRTPIVKSLEASSAAPAVSAGSTAKAKDKEKEKEKATGPKNVASMYANDLKALASSRPDEEDLWKSWGDLKMSYYPDTTNGEPSARDSKDAQPVEPRTTSSPAAPTPLRRSSTMNVSQSSRTQRVGSSEEGSPLKPSGAATDDRDGPKVVEIPRSVIESKRIYDLYDMCPSDMPATMKFEFTSRLRTCKALLGTHRERQLALAVRLLAITNLAYILPEAVFVDKVLKYDKDEPRTFQLVYQLAELIAPSPDGNPSEVPKWLQSITLALLEAISHQQEKHSDVLAALNVNVNHGILLYVIRIAVAEMKEDAPVDDQDELDADNWRGNLFGLTLQIAMATRIGQEMMTAGLMDCLVEILNLRTAVASRHYSMVLAFLDSLTYAYQTAFSQLNSAGGLDAITNLIVHTVGESKTLTEAGLGTKPELHASLVDYSIPFYHQQTLKWLLKFIHHVMANTYSFDGTNTERLLRNLVDNSSLLGSLCTIARQNRFFGTVVWSNATTLLSDFINNDPTSFAAISESGWIQAFLESVTNRPVSIPAEQPSLEPSQSRANDGSEGNDADDDSEDDGSAHDAAPDSDGQAATQPHPPTQEMLEAPRDFPPAHGILPSSESMNIIPTVLNSISLNNRGMKMVLSSGAIQSYMEIFESATHVQCMAHDPELASTIGSSLDELSRHHPALRPAIANAIIDMIARVTHLVKTMDATKACGARLEAPESSASPVAEPAQATEVKGKGKEKATDDTDVEMAEASSSSSGNNKPAQAPSIPYIQVLSTFLQPIISNSHLKGALISAGVIEILLDLAESPSLPHDFGETPACRMLVAAISQLIESAQIVGLPSLLFRMENTVKVLQPRINPTTTEPFFAPFLTLNSSVSPVQDEEPASEKRTPDVSSGTETVKALLNIQTMIKILYHCFPFSNRSQMVSMPAVNVYDYYIRLIQSLGPLLRGVLKEEAAVNGAVPHHWTLKNKPYQTNSLGSRTDVQDLLTDSAAQDSSANGKKLTPEEQSTAEYKNFQTLRVLLHSFMPSIFPFFQTIGKALLPRRNNNDPYIRSRHLAIAEASAETLIQQLQQSKAELTVRDIHNWIIMIHTFGEMVVDTNHRTASGGAFLILPVITAFKELGGFEALNVMLKRLADMVSTGATEGQEATKAKLSMIGMKKVLDIYCFIISGKNLSDSMAQIALAPKPTERTTREFSHQLVVELRMSILPVVREIWASNIIEKSTGTVVSKIIDIIKTIAAGDLESNAQSRSDKESLPHLFKNRESVPFKWISRKDAETLATEQGVDVDLALEALYRANGKESDTKEYIKYQKAHLVRNRNPVPAEDAFKEVPSPNLSSSAGMSLSNLLNTPTFPVSDLLGAEPMALDPVPNQPLGEASGETALGHATESSEDGSDEGQPGTSRETNVGASTTAPQQLPVLPSQQPATESQSNTPRITREDLVEERAKLYDTLIDRSLEVISSHPEAVFEVADLIQNTILKTDNEDRRVEVGEILANALMSFASDDADELKENGSSIAAYAHLLALLLQQTAFMRTTVDMLRDYVGDYLGFLKLPPASSNDSLPPWIPYILLIFEIMLFKDAQPPDIKWKQPVKEDDPIEESVIEVKEPNFLAEHRSSLLTTLLDFLPRIGKEESLAVSVLRILVVLTRDHAVAKIVGEKKNLQRLFVMAKQLCGAGSTRLKQTHISEHIRQILRHIIEDEETLRQIFETDIRHLMTSRQRPSAAPGLEPQAYLRTQAHLALRSPKTFVEVSTELLKLNRAVSHLGDGTLRSTPFLVLKERPADASVSPKESSVEPAVQATEDLTISDVKPSTEVTDKDMHDAPKNPAQDLKRPILEHPDGVVHFLLTELLNYKDVDERENVPAPPAAASKPESDATAANEATPSPSGDEQNSESKEKEKKLAKSPFKAEDHPIFIYRCFLLDCLAELLQSYNRAKVEFINFKRSAPVQANAPVKPRSSVLNYILNDLLCFSPASGVPESIAMKKKAATAVPARAVLVALVSKTGEKPQNRTHEPFEYDDEPDLLFIRRFVLDTILRAYKDASVSGEPADIRYGKMNALAELMAQMIGEGDKDSRPNNPRGTDPSIGRSQAQLKRLMYEKGYLTSLTASIADIDLTFPHNRAPLKPILAVIKTLSKTAVSMSQLGLIPASGTAGTDQAEDEFLSDGSSVSEDLTDDREETPDLYRNSTLGMLEPGRDDEFSDEDEDDDEDMYDDEQYDDELDYGDDMSQDNEDNPSDEEDDLGEMGEMGGMPGQPGVVEVLMGENDDEEDNDDMDDMDEDDEMDEDDEQELSDEDEDEEVGSEDMDDLEDDIHIVDEEGNAIDDDGASWDDGTDEDEEDEEELDYEAEAQNMQEAQLHNRRTFPEIMRAAMENAGDDLDAEPIRDFDGHYIDDDEDGEEDDDEDEGEDDMDDDMYFDGDGLHDDLLAPNMPSGLGWDIAIEPNHRHRPSRSPWPNSPFVVGRHRDAIDFQNFFRRPAHLSRHLPPPADVMSGTNPLLLPQSRREVPRHAHSQLVRLGITPNMIGGLGMGMGVEPLAFISDLVQHLPDVRLSAGGGPLALHFTADGPGGIIRELNAIPIPPPHSRESRPTEARRDTYQEPHQAVQFSPESTHERWQQEVKMIFGFGYQDKAQKLAPLILSKLTPAAIQAEKEEKARKAEADRKAEEERKKRQEEERKKREAKEAEEKAAREKKEAEERERLERERAEAAAQAAAQAAADQEANAVSQEAHPMEGVETQGPGENAEQQAEDERPRVYYTLRNQQIDITELGIDAEYLEALPEEFRDEVIAQAISTRRSQAREQVSQEGENTEVFQEFLEALPEELRNEILHQEQHEQRRRERQNAAGGQDLGPADMDPASILLTFPPGLRQQVLLDQGEDIMEHLGPELAAEARTLVARHRQLHAQQGGQAASRSRDAQRPTEAGAGTVQKIQKRTVVQMLDKQGIATLLRLMFVSQQGSIRSSLFSIFANLCENRQNRLDVISSLLQILQDGCANMDAVERSFAQISHKAKQLKEKDAKTPHPLKRSLTGGTNNNGQFPASSEVSPLLIVQQCLDLLVELSKLNPHIPSVFLTEHETVASTLKRSLSRKGKGKDVNGKAQKFAINSLLTLLDRSLVMESSAVMQVLADLLNKVTIPLQAIERRRKEAEEQAKKKKEAEEKAATEREAANAPEEQASTSTEQTPAQQEATQQPSESTPAAASGQQPAQQDQENKELEAPKEKADEKDVQSDEKKIRQLTPPTIPEHNLKLVINIFVARECSSKTFQNTISTIKNLSNIPGAKKVFGDELVRQARVLSENILSDLDNLLPHILKAESGTQIQGVALAKFSPGASEQNKLLRVLTALDHLFDSKSKKQDKPAEGENTKEDLLGSLYWNPTFGKMWDKLSACLSAIRQRDNMLNVATILLPLIESLMVVCKNTTLSDASAVSNANSQKEMLLTSPPPEDRIAGLFFTFTEEHRRILNELVRHNPKLMSGTFSLLVKNPKVLEFDNKRNYFNRSVHSKYQQTRHSFPPLQLQVRREHVFHDSFRSLYYKKADELKFGKLNIRFQGEEGVDAGGVTREWFQVLSRQMFDPNYVLFVPVSSDRTTFHPNKLSPINDEHLPFFKFIGRIIGKALYEGRLLECYFSRAVYKRILGKPVSVKDMESFDPDYYKSLVWMLENDITDIITETFSVEDDVFGEVKVVDLIENGRNIPVTEENKHEYVRLIVEHKLITSVKDQMKAFLTGFHEIIPEELIAIFNEQELELLISGLPDIDIDDWKANTEYHNYSAGAPQIQWFWRAVRSFDKEELAKLLQFVTGTSKVPLNGFKELEGMNGVSRFNIHRDYGSKDRLPSSHTCFNQLDLPEYENYETLRSQLLKAITAGSDYFGFA.

The span at 225–237 shows a compositional bias: low complexity; that stretch reads SSAAPAVSAGSTA. 17 disordered regions span residues 225 to 256, 288 to 360, 748 to 819, 921 to 970, 1083 to 1103, 1571 to 1646, 1988 to 2041, 2067 to 2110, 2275 to 2295, 2356 to 2551, 2581 to 2634, 2782 to 2817, 2858 to 2955, 3037 to 3066, 3105 to 3132, 3216 to 3241, and 3353 to 3444; these read SSAA…KNVA, YPDT…RDGP, IPAE…ILPS, LEAP…NKPA, SPVQ…SSGT, MALD…ITRE, PADA…KRPI, NVPA…KLAK, EGDK…IGRS, SGTA…ELDY, GDDL…LLAP, IPIP…ESTH, EKAR…QAED, EQHE…ASIL, RQLH…GAGT, KQLK…NNNG, and EEQA…QLTP. Residues 238–250 are compositionally biased toward basic and acidic residues; it reads KAKDKEKEKEKAT. A compositionally biased stretch (low complexity) spans 311–320; that stretch reads TTSSPAAPTP. Over residues 322 to 343 the composition is skewed to polar residues; that stretch reads RRSSTMNVSQSSRTQRVGSSEE. The segment covering 767–778 has biased composition (acidic residues); sequence EGNDADDDSEDD. Over residues 940-950 the composition is skewed to basic and acidic residues; that stretch reads VKGKGKEKATD. Over residues 959–969 the composition is skewed to polar residues; that stretch reads ASSSSSGNNKP. Over residues 1606–1620 the composition is skewed to polar residues; the sequence is PGTSRETNVGASTTA. Residues 1621-1632 are compositionally biased toward low complexity; it reads PQQLPVLPSQQP. The span at 1633–1642 shows a compositional bias: polar residues; sequence ATESQSNTPR. The segment covering 2021-2041 has biased composition (basic and acidic residues); sequence VTDKDMHDAPKNPAQDLKRPI. The segment covering 2086–2096 has biased composition (polar residues); it reads NEATPSPSGDE. The span at 2099–2110 shows a compositional bias: basic and acidic residues; that stretch reads SESKEKEKKLAK. Composition is skewed to acidic residues over residues 2378–2387 and 2405–2450; these read DLTDDREETP and EFSD…DLGE. The span at 2460–2469 shows a compositional bias: low complexity; the sequence is QPGVVEVLMG. Composition is skewed to acidic residues over residues 2470–2516 and 2523–2551; these read ENDD…DLED and EEGN…ELDY. Positions 2587-2597 are enriched in basic and acidic residues; that stretch reads EPIRDFDGHYI. A compositionally biased stretch (acidic residues) spans 2598 to 2622; sequence DDDEDGEEDDDEDEGEDDMDDDMYF. Basic and acidic residues-rich tracts occupy residues 2788 to 2803 and 2858 to 2912; these read HSRE…DTYQ and EKAR…ERAE. Residues 2851–2929 adopt a coiled-coil conformation; the sequence is AIQAEKEEKA…QAAADQEANA (79 aa). The span at 2913 to 2927 shows a compositional bias: low complexity; the sequence is AAAQAAAQAAADQEA. Over residues 3037 to 3047 the composition is skewed to basic and acidic residues; that stretch reads EQHEQRRRERQ. The segment covering 3108-3117 has biased composition (polar residues); that stretch reads HAQQGGQAAS. Positions 3341–3375 form a coiled coil; sequence PLQAIERRRKEAEEQAKKKKEAEEKAATEREAANA. Positions 3353-3372 are enriched in basic and acidic residues; sequence EEQAKKKKEAEEKAATEREA. A compositionally biased stretch (low complexity) spans 3373 to 3414; the sequence is ANAPEEQASTSTEQTPAQQEATQQPSESTPAAASGQQPAQQD. A compositionally biased stretch (basic and acidic residues) spans 3415 to 3439; that stretch reads QENKELEAPKEKADEKDVQSDEKKI. The HECT domain occupies 3740–4076; that stretch reads KADELKFGKL…TAGSDYFGFA (337 aa). Catalysis depends on Cys4043, which acts as the Glycyl thioester intermediate.

The protein belongs to the UPL family. TOM1/PTR1 subfamily.

The protein resides in the nucleus. The catalysed reaction is S-ubiquitinyl-[E2 ubiquitin-conjugating enzyme]-L-cysteine + [acceptor protein]-L-lysine = [E2 ubiquitin-conjugating enzyme]-L-cysteine + N(6)-ubiquitinyl-[acceptor protein]-L-lysine.. It functions in the pathway protein modification; protein ubiquitination. Its function is as follows. Probable ubiquitin ligase protein, which may be involved in mRNA export. E3 ubiquitin ligase proteins mediate ubiquitination and subsequent proteasomal degradation of target proteins. Participates in mRNA export from the nucleus by regulating the transport of hnRNP proteins. In Neurospora crassa (strain ATCC 24698 / 74-OR23-1A / CBS 708.71 / DSM 1257 / FGSC 987), this protein is E3 ubiquitin-protein ligase TOM1-like.